The sequence spans 179 residues: Large ribosomal subunit protein uL5c (179 aa).

It belongs to the universal ribosomal protein uL5 family. In terms of assembly, part of the 50S ribosomal subunit; contacts the 5S rRNA.

The protein localises to the plastid. Its subcellular location is the chloroplast. Its function is as follows. Binds 5S rRNA, forms part of the central protuberance of the 50S subunit. The sequence is that of Large ribosomal subunit protein uL5c (rpl5) from Gracilaria tenuistipitata var. liui (Red alga).